Here is a 141-residue protein sequence, read N- to C-terminus: Putative pre-16S rRNA nuclease (141 aa).

This sequence belongs to the YqgF nuclease family.

It localises to the cytoplasm. In terms of biological role, could be a nuclease involved in processing of the 5'-end of pre-16S rRNA. This Vibrio parahaemolyticus serotype O3:K6 (strain RIMD 2210633) protein is Putative pre-16S rRNA nuclease.